The chain runs to 157 residues: Transcription elongation factor GreA (157 aa).

Residues 13-75 are a coiled coil; that stretch reads RARLEAELEE…EIKSILARAQ (63 aa). Positions 113–142 are disordered; sequence EAKPSEGKISNESPIGSALLGKRPRQKVTV.

The protein belongs to the GreA/GreB family.

In terms of biological role, necessary for efficient RNA polymerase transcription elongation past template-encoded arresting sites. The arresting sites in DNA have the property of trapping a certain fraction of elongating RNA polymerases that pass through, resulting in locked ternary complexes. Cleavage of the nascent transcript by cleavage factors such as GreA or GreB allows the resumption of elongation from the new 3'terminus. GreA releases sequences of 2 to 3 nucleotides. This is Transcription elongation factor GreA from Roseiflexus sp. (strain RS-1).